Consider the following 117-residue polypeptide: Non-specific lipid-transfer protein 2B (117 aa).

An N-terminal signal peptide occupies residues 1–25 (MARAQLVLVALVAALLLAGPHTTMA). 4 disulfide bridges follow: C29–C76, C39–C53, C54–C99, and C74–C113.

This sequence belongs to the plant LTP family. In terms of tissue distribution, expressed in roots, mesocotyls and developing leaves.

Functionally, plant non-specific lipid-transfer proteins transfer phospholipids as well as galactolipids across membranes. May play a role in wax or cutin deposition in the cell walls of expanding epidermal cells and certain secretory tissues. In Oryza sativa subsp. japonica (Rice), this protein is Non-specific lipid-transfer protein 2B (LTP2-B).